The following is a 428-amino-acid chain: D-amino acid dehydrogenase (428 aa).

FAD is bound at residue 3–17 (VVILGSGVVGVASAY).

Belongs to the DadA oxidoreductase family. It depends on FAD as a cofactor.

The catalysed reaction is a D-alpha-amino acid + A + H2O = a 2-oxocarboxylate + AH2 + NH4(+). It functions in the pathway amino-acid degradation; D-alanine degradation; NH(3) and pyruvate from D-alanine: step 1/1. Its function is as follows. Oxidative deamination of D-amino acids. The sequence is that of D-amino acid dehydrogenase from Burkholderia pseudomallei (strain K96243).